We begin with the raw amino-acid sequence, 334 residues long: Pantothenate synthetase (334 aa).

Residue 34 to 41 (MGALHEGH) participates in ATP binding. H41 functions as the Proton donor in the catalytic mechanism. Q71 contributes to the (R)-pantoate binding site. Q71 contacts beta-alanine. 158–161 (GQKD) contributes to the ATP binding site. Residue Q164 participates in (R)-pantoate binding. ATP is bound by residues V187 and 195 to 198 (LSSR). A disordered region spans residues 288–334 (PLMLGTRGPAGEASPPNRERSEPGSAEQNKSPGEARTTPSGTSEASE). Residues 313-334 (AEQNKSPGEARTTPSGTSEASE) are compositionally biased toward polar residues.

Belongs to the pantothenate synthetase family. As to quaternary structure, homodimer.

It is found in the cytoplasm. The enzyme catalyses (R)-pantoate + beta-alanine + ATP = (R)-pantothenate + AMP + diphosphate + H(+). The protein operates within cofactor biosynthesis; (R)-pantothenate biosynthesis; (R)-pantothenate from (R)-pantoate and beta-alanine: step 1/1. Its function is as follows. Catalyzes the condensation of pantoate with beta-alanine in an ATP-dependent reaction via a pantoyl-adenylate intermediate. This Nocardioides sp. (strain ATCC BAA-499 / JS614) protein is Pantothenate synthetase.